Reading from the N-terminus, the 262-residue chain is Glucosamine-6-phosphate deaminase (262 aa).

Asp-63 serves as the catalytic Proton acceptor; for enolization step. The For ring-opening step role is filled by Asn-129. His-131 functions as the Proton acceptor; for ring-opening step in the catalytic mechanism. Catalysis depends on Glu-136, which acts as the For ring-opening step.

It belongs to the glucosamine/galactosamine-6-phosphate isomerase family. NagB subfamily.

It carries out the reaction alpha-D-glucosamine 6-phosphate + H2O = beta-D-fructose 6-phosphate + NH4(+). The protein operates within amino-sugar metabolism; N-acetylneuraminate degradation; D-fructose 6-phosphate from N-acetylneuraminate: step 5/5. Functionally, catalyzes the reversible isomerization-deamination of glucosamine 6-phosphate (GlcN6P) to form fructose 6-phosphate (Fru6P) and ammonium ion. The polypeptide is Glucosamine-6-phosphate deaminase (Bacillus cereus (strain B4264)).